A 400-amino-acid polypeptide reads, in one-letter code: Acetate kinase (400 aa).

Residue Asn10 coordinates Mg(2+). Residue Lys17 coordinates ATP. Arg91 is a binding site for substrate. The Proton donor/acceptor role is filled by Asp150. Residues 210–214 (HLGNG), 285–287 (DCR), and 333–337 (GIGEN) contribute to the ATP site. Glu387 serves as a coordination point for Mg(2+).

The protein belongs to the acetokinase family. As to quaternary structure, homodimer. It depends on Mg(2+) as a cofactor. Mn(2+) serves as cofactor.

It localises to the cytoplasm. The catalysed reaction is acetate + ATP = acetyl phosphate + ADP. It participates in metabolic intermediate biosynthesis; acetyl-CoA biosynthesis; acetyl-CoA from acetate: step 1/2. In terms of biological role, catalyzes the formation of acetyl phosphate from acetate and ATP. Can also catalyze the reverse reaction. This is Acetate kinase from Photorhabdus laumondii subsp. laumondii (strain DSM 15139 / CIP 105565 / TT01) (Photorhabdus luminescens subsp. laumondii).